A 1890-amino-acid polypeptide reads, in one-letter code: Proteasome-associated protein ECM29 homolog (1890 aa).

18 HEAT repeats span residues 6-29, 30-67, 130-167, 226-263, 294-330, 334-354, 355-395, 459-496, 498-523, 524-561, 565-602, 685-722, 776-813, 843-882, 938-975, 980-1018, 1118-1155, and 1159-1196; these read NAEI…EKLE, AAVG…RLSS, DKLF…ICAN, FSDL…MLDF, RVRQ…TNTN, KVLA…ELVS, KVSK…SFPQ, GQQH…EYYA, ARYL…LYGT, SKKD…EQRR, PSFQ…SLEV, AKQL…FGLS, PQFV…AVEI, STKL…GDGE, DDFD…HCSQ, LAKK…ISDS, PYLG…DSKE, and RYYW…RPNG. Ser1213 carries the post-translational modification Phosphoserine. HEAT repeat units follow at residues 1271–1309, 1313–1350, 1378–1415, 1416–1457, 1497–1534, 1541–1578, 1583–1620, and 1623–1660; these read AVAS…SSGS, PHLA…AQEA, SVLE…IRLG, KEMT…LAKE, DYMD…DVSP, LNLN…RLSS, PDRL…GLDR, and QICS…QLEA. The disordered stretch occupies residues 1680–1702; it reads RKESDDEDEPNTSQELSADERNK. Ser1683 is modified (phosphoserine). A Phosphothreonine modification is found at Thr1691. Ser1692 bears the Phosphoserine mark. HEAT repeat units lie at residues 1751–1788 and 1826–1863; these read PVQV…EKKI and KEAL…NLEK.

As to quaternary structure, associated with the proteasome.

It is found in the cytoplasm. This is Proteasome-associated protein ECM29 homolog from Drosophila melanogaster (Fruit fly).